The chain runs to 963 residues: Pyruvate, phosphate dikinase 1, chloroplastic (963 aa).

A chloroplast-targeting transit peptide spans 1–76 (MLYIRKKMTS…GLHRETKARA (76 aa)). Thr-543 is subject to Phosphothreonine; by PDRP1. The active-site Tele-phosphohistidine intermediate is the His-545. The substrate site is built by Arg-651, Arg-707, Glu-836, Gly-857, Thr-858, Asn-859, and Asp-860. Residue Glu-836 coordinates Mg(2+). Residue Asp-860 participates in Mg(2+) binding. Residue Cys-922 is the Proton donor of the active site.

The protein belongs to the PEP-utilizing enzyme family. In terms of assembly, homotetramer. Interacts with RP1 and RP2. It depends on Mg(2+) as a cofactor. In terms of processing, phosphorylation of Thr-543 in the dark inactivates the enzyme. Dephosphorylation upon light stimulation reactivates the enzyme. As to expression, isoform 1 is expressed in leaves, flowers and siliques. Isoform 2 is found in cotyledons, rosette and cauline leaves, petioles, flowers and siliques.

It localises to the plastid. Its subcellular location is the chloroplast. It is found in the cytoplasm. The catalysed reaction is pyruvate + phosphate + ATP = phosphoenolpyruvate + AMP + diphosphate + H(+). Activated by light-induced dephosphorylation. Inhibited by dark-induced phosphorylation. Both reactions are catalyzed by PDRP1. Formation of phosphoenolpyruvate. May be involved in regulating the flux of carbon into starch and fatty acids of seeds and in the remobilization of nitrogen reserves in senescing leaves. The sequence is that of Pyruvate, phosphate dikinase 1, chloroplastic (PPDK) from Arabidopsis thaliana (Mouse-ear cress).